Consider the following 61-residue polypeptide: UPF0391 membrane protein Aave_0978 (61 aa).

Transmembrane regions (helical) follow at residues 5 to 25 (AIIF…GVAA) and 33 to 53 (ILFF…VLGV).

The protein belongs to the UPF0391 family.

The protein resides in the cell membrane. This chain is UPF0391 membrane protein Aave_0978, found in Paracidovorax citrulli (strain AAC00-1) (Acidovorax citrulli).